Here is a 609-residue protein sequence, read N- to C-terminus: Threonine--tRNA ligase (609 aa).

Residues 1–145 (MRLLLIHSDY…TIVPGAGAAV (145 aa)) form an editing domain region. A catalytic region spans residues 194–485 (IHVDLMRSKE…TANQSVPQLP (292 aa)). Zn(2+) contacts are provided by C286, H338, and H458.

It belongs to the class-II aminoacyl-tRNA synthetase family. Homodimer. Requires Zn(2+) as cofactor.

The protein localises to the cytoplasm. The catalysed reaction is tRNA(Thr) + L-threonine + ATP = L-threonyl-tRNA(Thr) + AMP + diphosphate + H(+). Functionally, catalyzes the attachment of threonine to tRNA(Thr) in a two-step reaction: L-threonine is first activated by ATP to form Thr-AMP and then transferred to the acceptor end of tRNA(Thr). Also edits incorrectly charged L-seryl-tRNA(Thr). The sequence is that of Threonine--tRNA ligase from Methanosphaerula palustris (strain ATCC BAA-1556 / DSM 19958 / E1-9c).